We begin with the raw amino-acid sequence, 469 residues long: UDP-N-acetylmuramate--L-alanine ligase (469 aa).

ATP is bound at residue 114–120; that stretch reads GTHGKTT.

This sequence belongs to the MurCDEF family.

The protein resides in the cytoplasm. It carries out the reaction UDP-N-acetyl-alpha-D-muramate + L-alanine + ATP = UDP-N-acetyl-alpha-D-muramoyl-L-alanine + ADP + phosphate + H(+). It functions in the pathway cell wall biogenesis; peptidoglycan biosynthesis. Its function is as follows. Cell wall formation. In Chlorobium phaeovibrioides (strain DSM 265 / 1930) (Prosthecochloris vibrioformis (strain DSM 265)), this protein is UDP-N-acetylmuramate--L-alanine ligase.